Reading from the N-terminus, the 63-residue chain is Glutamine synthetase translation inhibitor (63 aa).

Its function is as follows. Inhibits the synthesis of glutamine synthetase II. In Rhizobium leguminosarum, this protein is Glutamine synthetase translation inhibitor (gstI).